The primary structure comprises 352 residues: Probable protein phosphatase 2C 42 (352 aa).

Residues 26–321 (AYASSAMQGY…DNMSVILVRF (296 aa)) form the PPM-type phosphatase domain. The Mn(2+) site is built by Asp-62, Gly-63, Asp-267, and Asp-312. The tract at residues 328–352 (RGARAATSSTSTGTVPSRHSKSISL) is disordered. Residues 329 to 341 (GARAATSSTSTGT) are compositionally biased toward low complexity.

The protein belongs to the PP2C family. Requires Mg(2+) as cofactor. Mn(2+) is required as a cofactor.

The catalysed reaction is O-phospho-L-seryl-[protein] + H2O = L-seryl-[protein] + phosphate. The enzyme catalyses O-phospho-L-threonyl-[protein] + H2O = L-threonyl-[protein] + phosphate. The chain is Probable protein phosphatase 2C 42 from Oryza sativa subsp. japonica (Rice).